The chain runs to 173 residues: Peptide deformylase (173 aa).

Residues Cys91 and His133 each coordinate Fe cation. Residue Glu134 is part of the active site. His137 is a Fe cation binding site.

This sequence belongs to the polypeptide deformylase family. The cofactor is Fe(2+).

It carries out the reaction N-terminal N-formyl-L-methionyl-[peptide] + H2O = N-terminal L-methionyl-[peptide] + formate. Removes the formyl group from the N-terminal Met of newly synthesized proteins. Requires at least a dipeptide for an efficient rate of reaction. N-terminal L-methionine is a prerequisite for activity but the enzyme has broad specificity at other positions. This Blochmanniella pennsylvanica (strain BPEN) protein is Peptide deformylase.